The following is a 155-amino-acid chain: UPF0305 protein MTH_811 (155 aa).

This sequence belongs to the UPF0305 family.

The sequence is that of UPF0305 protein MTH_811 from Methanothermobacter thermautotrophicus (strain ATCC 29096 / DSM 1053 / JCM 10044 / NBRC 100330 / Delta H) (Methanobacterium thermoautotrophicum).